Here is a 269-residue protein sequence, read N- to C-terminus: 2-dehydro-3-deoxyphosphooctonate aldolase (269 aa).

It belongs to the KdsA family.

The protein localises to the cytoplasm. It carries out the reaction D-arabinose 5-phosphate + phosphoenolpyruvate + H2O = 3-deoxy-alpha-D-manno-2-octulosonate-8-phosphate + phosphate. The protein operates within carbohydrate biosynthesis; 3-deoxy-D-manno-octulosonate biosynthesis; 3-deoxy-D-manno-octulosonate from D-ribulose 5-phosphate: step 2/3. Its pathway is bacterial outer membrane biogenesis; lipopolysaccharide biosynthesis. The chain is 2-dehydro-3-deoxyphosphooctonate aldolase from Chlamydia caviae (strain ATCC VR-813 / DSM 19441 / 03DC25 / GPIC) (Chlamydophila caviae).